The chain runs to 187 residues: MKPTKSNKPKKTTKFPKQTESNTDDFFIIDSVVYFTLLGRGKGTFAFVSLDKWPIVSKYKWYLGKSGYPVSYDLGKMQLHRFIYTLIIEGKIPSDIYVDHIDHNKLNNTNSNLRLATPQQNSFNKSTSSNKKGVRKISENNYKASVVKNGITHEIKNIPTEEQAAQIYNLMAEELFGEFAAPNKIDF.

This is an uncharacterized protein from Acanthamoeba polyphaga mimivirus (APMV).